The primary structure comprises 422 residues: Oxysterol-binding protein 7 (422 aa).

The interval 283–313 is disordered; that stretch reads EAAPASSASKKEKKKEKKKAKHSKHTCSPSD. The segment covering 293-307 has biased composition (basic residues); that stretch reads KEKKKEKKKAKHSKH. The stretch at 354–384 forms a coiled coil; that stretch reads MQAADQIKKEIEDEQRKRLQITKEEEKKERA. Positions 402 to 422 are disordered; the sequence is TLAPVSNSTSSTASDAASGSN. Over residues 407–422 the composition is skewed to low complexity; sequence SNSTSSTASDAASGSN.

Belongs to the OSBP family.

The chain is Oxysterol-binding protein 7 (osbG) from Dictyostelium discoideum (Social amoeba).